Consider the following 68-residue polypeptide: Urocalcin (68 aa).

The N-terminal stretch at 1-27 (MKASTLVVIFIVIFITISSFSIHDVQA) is a signal peptide. A propeptide spanning residues 28–35 (SGVEKREQ) is cleaved from the precursor. 3 cysteine pairs are disulfide-bonded: cysteine 38-cysteine 52, cysteine 45-cysteine 56, and cysteine 51-cysteine 67. The segment at 57-59 (KRR) is essential for stimulation of [3H]ryanodine binding to RYR1.

This sequence belongs to the scorpion calcin family. Expressed by the venom gland.

It localises to the secreted. Functionally, this toxin only weakly stabilizes ryanodine receptor 1 (RyR1) opening in a long-lasting subconductance state (55% of the full conductance state obtained only at high concentrations (1 uM)). In addition, it has been shown to dose-dependently stimulate ryanodine binding to RyR1 with the lowest activity of all calcins (EC(50)=376 nM). It also augments the bell-shaped calcium-[3H]ryanodine binding curve that is maximal at about 10 uM calcium concentration. It binds a different site as ryanodine. It acts synergistically with caffeine. In contrast to other calcins, it does not trigger calcium release from sarcoplasmic vesicles even at high concentration (1 uM). In vivo, intracerebroventricular injection into mice induces neurotoxic symptoms, followed by death. This chain is Urocalcin, found in Urodacus yaschenkoi (Inland robust scorpion).